We begin with the raw amino-acid sequence, 143 residues long: NADH-quinone oxidoreductase subunit A (143 aa).

Transmembrane regions (helical) follow at residues 7–27, 63–83, and 93–113; these read GFGNVFVFLALGIVFVAGGYL, FYVVALIFIIFDVEVVFLYPW, and FALFEALVFAGILILGLAYAW.

Belongs to the complex I subunit 3 family. In terms of assembly, NDH-1 is composed of 14 different subunits. Subunits NuoA, H, J, K, L, M, N constitute the membrane sector of the complex.

Its subcellular location is the cell inner membrane. It carries out the reaction a quinone + NADH + 5 H(+)(in) = a quinol + NAD(+) + 4 H(+)(out). In terms of biological role, NDH-1 shuttles electrons from NADH, via FMN and iron-sulfur (Fe-S) centers, to quinones in the respiratory chain. The immediate electron acceptor for the enzyme in this species is believed to be a menaquinone. Couples the redox reaction to proton translocation (for every two electrons transferred, four hydrogen ions are translocated across the cytoplasmic membrane), and thus conserves the redox energy in a proton gradient. The sequence is that of NADH-quinone oxidoreductase subunit A from Chlorobium limicola (strain DSM 245 / NBRC 103803 / 6330).